Reading from the N-terminus, the 816-residue chain is Leucine--tRNA ligase (816 aa).

A 'HIGH' region motif is present at residues 46–56 (PYPSGALHMGH). The 'KMSKS' region motif lies at 638-642 (KMSKS). Lys-641 contributes to the ATP binding site.

The protein belongs to the class-I aminoacyl-tRNA synthetase family.

It localises to the cytoplasm. It catalyses the reaction tRNA(Leu) + L-leucine + ATP = L-leucyl-tRNA(Leu) + AMP + diphosphate. The sequence is that of Leucine--tRNA ligase from Xanthomonas campestris pv. campestris (strain ATCC 33913 / DSM 3586 / NCPPB 528 / LMG 568 / P 25).